Here is a 101-residue protein sequence, read N- to C-terminus: Small ribosomal subunit protein uS10 (101 aa).

Belongs to the universal ribosomal protein uS10 family. In terms of assembly, part of the 30S ribosomal subunit.

In terms of biological role, involved in the binding of tRNA to the ribosomes. The sequence is that of Small ribosomal subunit protein uS10 from Christiangramia forsetii (strain DSM 17595 / CGMCC 1.15422 / KT0803) (Gramella forsetii).